The chain runs to 340 residues: L-threonine 3-dehydrogenase (340 aa).

Zn(2+) is bound at residue cysteine 38. Active-site charge relay system residues include threonine 40 and histidine 43. Zn(2+) contacts are provided by histidine 63, glutamate 64, cysteine 93, cysteine 96, cysteine 99, and cysteine 107. NAD(+) is bound by residues isoleucine 175, aspartate 195, arginine 200, 261 to 263, and 285 to 286; these read LGI and IY.

It belongs to the zinc-containing alcohol dehydrogenase family. In terms of assembly, homotetramer. Zn(2+) is required as a cofactor.

It localises to the cytoplasm. It carries out the reaction L-threonine + NAD(+) = (2S)-2-amino-3-oxobutanoate + NADH + H(+). The protein operates within amino-acid degradation; L-threonine degradation via oxydo-reductase pathway; glycine from L-threonine: step 1/2. Functionally, catalyzes the NAD(+)-dependent oxidation of L-threonine to 2-amino-3-ketobutyrate. This chain is L-threonine 3-dehydrogenase, found in Xanthomonas campestris pv. campestris (strain ATCC 33913 / DSM 3586 / NCPPB 528 / LMG 568 / P 25).